A 147-amino-acid chain; its full sequence is Large ribosomal subunit protein uL13 (147 aa).

Residues 126-147 (GGPEHPHAAQNPQPYEITQIAQ) are disordered.

The protein belongs to the universal ribosomal protein uL13 family. In terms of assembly, part of the 50S ribosomal subunit.

This protein is one of the early assembly proteins of the 50S ribosomal subunit, although it is not seen to bind rRNA by itself. It is important during the early stages of 50S assembly. The sequence is that of Large ribosomal subunit protein uL13 from Cutibacterium acnes (strain DSM 16379 / KPA171202) (Propionibacterium acnes).